The primary structure comprises 372 residues: MFSFQINSNCSSTRARVGCLNTPHGDVHTPQFMPVGTLGTVKGVSPDQLLKTGSEMILANTYHLHLQPGEEIVHEAGGLHKFMGWDQPILTDSGGYQVFSLGKLNKIDDEGVEFKNPRDGSHLKLTPEIAIQIQMSLGSDIAMAFDQCPPYPATFNDVEEACLRTHNWLERSIAIHNKSDQALFGIIQGGCYPELREESARVVSSFNLPGIAIGGVSVGEPSDQINHIVRKVAPLLPEGIPRYLMGIGSLRELAIAVSNGIDLFDCVMPTRLGRHGTALVSGERWNLRNATFRNDHKPLDETCLCETCTNHTRAYLHHLIRSEELLGLTLLSVHNISHLIRFTRAMGRAIEDGCFSEDFAPWQKDSIAHYTW.

The Proton acceptor role is filled by D92. Substrate-binding positions include 92-96 (DSGGY), D146, Q188, and G215. An RNA binding region spans residues 246 to 252 (GIGSLRE). D265 serves as the catalytic Nucleophile. Residues 270-274 (TRLGR) are RNA binding; important for wobble base 34 recognition. Residues C303, C305, C308, and H334 each contribute to the Zn(2+) site.

It belongs to the queuine tRNA-ribosyltransferase family. Homodimer. Within each dimer, one monomer is responsible for RNA recognition and catalysis, while the other monomer binds to the replacement base PreQ1. Zn(2+) is required as a cofactor.

It catalyses the reaction 7-aminomethyl-7-carbaguanine + guanosine(34) in tRNA = 7-aminomethyl-7-carbaguanosine(34) in tRNA + guanine. It functions in the pathway tRNA modification; tRNA-queuosine biosynthesis. Functionally, catalyzes the base-exchange of a guanine (G) residue with the queuine precursor 7-aminomethyl-7-deazaguanine (PreQ1) at position 34 (anticodon wobble position) in tRNAs with GU(N) anticodons (tRNA-Asp, -Asn, -His and -Tyr). Catalysis occurs through a double-displacement mechanism. The nucleophile active site attacks the C1' of nucleotide 34 to detach the guanine base from the RNA, forming a covalent enzyme-RNA intermediate. The proton acceptor active site deprotonates the incoming PreQ1, allowing a nucleophilic attack on the C1' of the ribose to form the product. After dissociation, two additional enzymatic reactions on the tRNA convert PreQ1 to queuine (Q), resulting in the hypermodified nucleoside queuosine (7-(((4,5-cis-dihydroxy-2-cyclopenten-1-yl)amino)methyl)-7-deazaguanosine). The polypeptide is Queuine tRNA-ribosyltransferase (Prochlorococcus marinus (strain MIT 9211)).